The chain runs to 499 residues: Probable cytosol aminopeptidase (499 aa).

The Mn(2+) site is built by K267 and D272. Residue K279 is part of the active site. Mn(2+)-binding residues include D290, D349, and E351. The active site involves R353.

Belongs to the peptidase M17 family. Mn(2+) serves as cofactor.

Its subcellular location is the cytoplasm. The enzyme catalyses Release of an N-terminal amino acid, Xaa-|-Yaa-, in which Xaa is preferably Leu, but may be other amino acids including Pro although not Arg or Lys, and Yaa may be Pro. Amino acid amides and methyl esters are also readily hydrolyzed, but rates on arylamides are exceedingly low.. The catalysed reaction is Release of an N-terminal amino acid, preferentially leucine, but not glutamic or aspartic acids.. In terms of biological role, presumably involved in the processing and regular turnover of intracellular proteins. Catalyzes the removal of unsubstituted N-terminal amino acids from various peptides. In Alkaliphilus oremlandii (strain OhILAs) (Clostridium oremlandii (strain OhILAs)), this protein is Probable cytosol aminopeptidase.